A 173-amino-acid chain; its full sequence is Lectin BRA-2 (173 aa).

Asn39 carries N-linked (GlcNAc...) asparagine glycosylation. Disulfide bonds link Cys47/Cys61, Cys78/Cys168, and Cys144/Cys160. The 120-residue stretch at 51-170 (PNGWVTSENK…NDRYNFVCEI (120 aa)) folds into the C-type lectin domain.

In terms of assembly, homohexamer; disulfide-linked. Coelemic fluid.

Sugar-binding protein which recognizes specific carbohydrate structures and agglutinates a variety of animal cells by binding to cell-surface glycoproteins and glycolipids. Calcium-dependent lectin. Invertebrate lectins may be involved in defense functions. This Megabalanus rosa (Acorn barnacle) protein is Lectin BRA-2.